The chain runs to 108 residues: ATP-dependent Clp protease adapter protein ClpS (108 aa).

This sequence belongs to the ClpS family. Binds to the N-terminal domain of the chaperone ClpA.

In terms of biological role, involved in the modulation of the specificity of the ClpAP-mediated ATP-dependent protein degradation. The polypeptide is ATP-dependent Clp protease adapter protein ClpS (Mycobacterium leprae (strain TN)).